Reading from the N-terminus, the 419-residue chain is L-rhamnose isomerase (419 aa).

Mn(2+) is bound by residues His-262, Asp-294, and Asp-296.

The protein belongs to the rhamnose isomerase family. Homotetramer. Requires Mn(2+) as cofactor.

Its subcellular location is the cytoplasm. It catalyses the reaction L-rhamnopyranose = L-rhamnulose. Its pathway is carbohydrate degradation; L-rhamnose degradation; glycerone phosphate from L-rhamnose: step 1/3. In terms of biological role, catalyzes the interconversion of L-rhamnose and L-rhamnulose. This is L-rhamnose isomerase from Escherichia coli O7:K1 (strain IAI39 / ExPEC).